The primary structure comprises 164 residues: Ribosomal RNA large subunit methyltransferase H (164 aa).

Residue Gly109 participates in S-adenosyl-L-methionine binding.

This sequence belongs to the RNA methyltransferase RlmH family. In terms of assembly, homodimer.

It localises to the cytoplasm. The catalysed reaction is pseudouridine(1915) in 23S rRNA + S-adenosyl-L-methionine = N(3)-methylpseudouridine(1915) in 23S rRNA + S-adenosyl-L-homocysteine + H(+). Specifically methylates the pseudouridine at position 1915 (m3Psi1915) in 23S rRNA. This Methylobacterium radiotolerans (strain ATCC 27329 / DSM 1819 / JCM 2831 / NBRC 15690 / NCIMB 10815 / 0-1) protein is Ribosomal RNA large subunit methyltransferase H.